A 398-amino-acid polypeptide reads, in one-letter code: E3 ubiquitin-protein ligase MARCHF11 (398 aa).

Residues 1-14 show a composition bias toward basic and acidic residues; the sequence is MSDEGSKRGSRADS. Residues 1-158 are disordered; sequence MSDEGSKRGS…GSGDQRSGHQ (158 aa). The span at 19–31 shows a compositional bias: pro residues; that stretch reads PPLPPPPPPPPPG. 2 stretches are compositionally biased toward basic and acidic residues: residues 94 to 104 and 121 to 130; these read EGPRRLPEVKL and ACREGERRGT. The RING-CH-type zinc finger occupies 158–218; the sequence is QHQHHQPICK…ELCCYRYHVT (61 aa). Cys-166, Cys-169, Cys-182, Cys-184, His-192, Cys-195, Cys-208, and Cys-211 together coordinate Zn(2+). 2 consecutive transmembrane segments (helical) span residues 241–261 and 274–294; these read MIAV…LLWS and ILFQ…IGLI. Positions 367–370 match the YXXL motif motif; the sequence is YVLL. The short motif at 395-398 is the PDZ-binding element; sequence VTSV.

Interacts (YXXL motif) with AP1M1. Interacts (via PDZ-binding motif) with LIN7A. Interacts with unidentified fucose glycoproteins. As to expression, predominantly expressed in testis. Present in early developing spermatids. Not present in spermatogonia, spermatocytes or somatic cells (i.e. peritubular, Leydig, and Sertoli cells). Present in early round spermatids at step 4, remains until step 11, then it decreases at steps 12-15, and diminishes after step 16 (at protein level). Also expressed at lower level in brain.

The protein localises to the cytoplasmic vesicle membrane. It carries out the reaction S-ubiquitinyl-[E2 ubiquitin-conjugating enzyme]-L-cysteine + [acceptor protein]-L-lysine = [E2 ubiquitin-conjugating enzyme]-L-cysteine + N(6)-ubiquitinyl-[acceptor protein]-L-lysine.. It participates in protein modification; protein ubiquitination. In terms of biological role, E3 ubiquitin-protein ligase that mediates polyubiquitination of CD4. E3 ubiquitin ligases accept ubiquitin from an E2 ubiquitin-conjugating enzyme in the form of a thioester and then directly transfer the ubiquitin to targeted substrates. May play a role in ubuquitin-dependent protein sorting in developmenting spermatids. This is E3 ubiquitin-protein ligase MARCHF11 (Marchf11) from Rattus norvegicus (Rat).